The sequence spans 242 residues: Large ribosomal subunit protein uL1 (242 aa).

Belongs to the universal ribosomal protein uL1 family. Part of the 50S ribosomal subunit.

Functionally, binds directly to 23S rRNA. The L1 stalk is quite mobile in the ribosome, and is involved in E site tRNA release. Protein L1 is also a translational repressor protein, it controls the translation of the L11 operon by binding to its mRNA. This is Large ribosomal subunit protein uL1 from Sulfurihydrogenibium sp. (strain YO3AOP1).